The sequence spans 396 residues: E3 ubiquitin-protein transferase MAEA (396 aa).

The interval 1 to 124 is extracellular and involved in cell to cell contact; it reads MAVQESAAQL…AAASMWKRKR (124 aa). Threonine 28 is modified (phosphothreonine). The LisH domain maps to 121 to 153; the sequence is KRKRMDRMMVEHLLRCGYYNTAVKLARQSGIED. The CTLH domain maps to 159-216; sequence MFLTAKEVEESLERRETATCLAWCHDNKSRLRKMKSCLEFSLRIQEFIELVRQNKRLD. Residues 314–381 form an RING-Gid-type zinc finger; it reads CPVCSRSLNK…QDDKVVCPRT (68 aa).

Identified in the CTLH complex that contains GID4, RANBP9 and/or RANBP10, MKLN1, MAEA, RMND5A (or alternatively its paralog RMND5B), GID8, ARMC8, WDR26 and YPEL5. Within this complex, MAEA, RMND5A (or alternatively its paralog RMND5B), GID8, WDR26, and RANBP9 and/or RANBP10 form the catalytic core, while GID4, MKLN1, ARMC8 and YPEL5 have ancillary roles. Interacts with F-actin. In terms of processing, autoubiquitinated as component of the CTLH E3 ubiquitin-protein ligase complex (in vitro). In terms of tissue distribution, detected in embryonic fibroblasts. Detected in macrophages. Detected in heart. liver, spleen and kidney (at protein level).

It localises to the cytoplasm. The protein resides in the nucleus. Its subcellular location is the nucleoplasm. The protein localises to the nucleus matrix. It is found in the cell membrane. It localises to the cytoskeleton. The enzyme catalyses S-ubiquitinyl-[E2 ubiquitin-conjugating enzyme]-L-cysteine + [acceptor protein]-L-lysine = [E2 ubiquitin-conjugating enzyme]-L-cysteine + N(6)-ubiquitinyl-[acceptor protein]-L-lysine.. Core component of the CTLH E3 ubiquitin-protein ligase complex that selectively accepts ubiquitin from UBE2H and mediates ubiquitination and subsequent proteasomal degradation of the transcription factor HBP1. MAEA and RMND5A are both required for catalytic activity of the CTLH E3 ubiquitin-protein ligase complex. MAEA is required for normal cell proliferation. The CTLH E3 ubiquitin-protein ligase complex is not required for the degradation of enzymes involved in gluconeogenesis, such as FBP1. Plays a role in erythroblast enucleation during erythrocyte maturation and in the development of mature macrophages. Mediates the attachment of erythroid cell to mature macrophages; this MAEA-mediated contact inhibits erythroid cell apoptosis. Participates in erythroblastic island formation, which is the functional unit of definitive erythropoiesis. Associates with F-actin to regulate actin distribution in erythroblasts and macrophages. May contribute to nuclear architecture and cells division events. The chain is E3 ubiquitin-protein transferase MAEA (Maea) from Mus musculus (Mouse).